Reading from the N-terminus, the 138-residue chain is Large-conductance mechanosensitive channel (138 aa).

The next 3 membrane-spanning stretches (helical) occupy residues 19–39 (VGVIIGGAFGAIVTSLVGDII), 40–60 (MPIIGAITGGLDFSNYFIPLA), and 81–101 (GSFLTLTLNFFIVAFVLFMVI).

It belongs to the MscL family. In terms of assembly, homopentamer.

The protein localises to the cell inner membrane. Its function is as follows. Channel that opens in response to stretch forces in the membrane lipid bilayer. May participate in the regulation of osmotic pressure changes within the cell. The polypeptide is Large-conductance mechanosensitive channel (Bradyrhizobium sp. (strain ORS 278)).